Reading from the N-terminus, the 376-residue chain is Secreted LysM effector LysM9 (376 aa).

Residues 1–25 (MGHFHLSNFIALIGILLVGPTATSG) form the signal peptide. A LysM domain is found at 41–89 (SKYVVQAGETCSAIAQAHSITTADIETYNAQSWAWTGCGQISQGDFICL). The disordered stretch occupies residues 190–219 (SSETSSSMTTSTSATTSVPTTTSTTTTTKT).

It belongs to the secreted LysM effector family.

Its subcellular location is the secreted. Secreted LysM effector that might have a role in sequestration of chitin oligosaccharides (breakdown products of fungal cell walls that are released during invasion and act as triggers of host immunity) to dampen host defense. In Penicillium expansum (Blue mold rot fungus), this protein is Secreted LysM effector LysM9.